Here is a 373-residue protein sequence, read N- to C-terminus: Deoxyguanosinetriphosphate triphosphohydrolase-like protein 1 (373 aa).

Residues 21–43 (RSSEARRAVPEAPSETRTAYQKD) are disordered. Residues 76–198 (RLTHTLEVQQ…VDAADALAYT (123 aa)) form the HD domain.

It belongs to the dGTPase family. Type 2 subfamily.

The chain is Deoxyguanosinetriphosphate triphosphohydrolase-like protein 1 from Deinococcus radiodurans (strain ATCC 13939 / DSM 20539 / JCM 16871 / CCUG 27074 / LMG 4051 / NBRC 15346 / NCIMB 9279 / VKM B-1422 / R1).